The sequence spans 501 residues: L-aspartate decarboxylase dtxS4 (501 aa).

106-108 (KLT) contributes to the substrate binding site. An N6-(pyridoxal phosphate)lysine modification is found at Lys320. Residue Arg474 coordinates substrate.

Belongs to the group II decarboxylase family. Requires pyridoxal 5'-phosphate as cofactor.

It catalyses the reaction L-aspartate + H(+) = beta-alanine + CO2. It functions in the pathway secondary metabolite biosynthesis. L-aspartate decarboxylase; part of the gene cluster that mediates the biosynthesis of destruxins, insecticidal cyclic hexadepsipeptides which induce flaccid paralysis and visceral muscle contraction in insects through targeting the calcium channels and vacuolar-type ATPases. The aldo-keto reductase dtxS3 converts alpha-ketoisocaproic acid from deaminated leucine into alpha-hydroxyisocaproic acid (HIC), which is the first substrate for destruxin assembly by dtxS1. L-aspartate decarboxylase dtxS4 converts aspartic acid into beta-alanine, the last substrate for the destruxin assembly line performed by dtxS1. The nonribosomal peptide synthetase dtxS1 synthesizes destruxins B and B2, whereas the cytochrome P450 monooxygenase dtxS2 is required to convert destruxin B into other destruxin derivatives, including destructins C, D, A and E. Destruxin E-diol (ED) is further produced in a non-enzymatic manner from destruxin E. Destruxins play an important role in virulence and escape from insect host immune defenses. The chain is L-aspartate decarboxylase dtxS4 from Metarhizium robertsii (strain ARSEF 23 / ATCC MYA-3075) (Metarhizium anisopliae (strain ARSEF 23)).